We begin with the raw amino-acid sequence, 157 residues long: 2-C-methyl-D-erythritol 2,4-cyclodiphosphate synthase (157 aa).

Residues aspartate 8 and histidine 10 each coordinate a divalent metal cation. Residues 8 to 10 (DVH) and 34 to 35 (HS) each bind 4-CDP-2-C-methyl-D-erythritol 2-phosphate. Histidine 42 provides a ligand contact to a divalent metal cation. 4-CDP-2-C-methyl-D-erythritol 2-phosphate is bound by residues 56–58 (DIG), 61–65 (FPDTD), 100–106 (AQAPKMA), 132–135 (TTTE), phenylalanine 139, and arginine 142.

The protein belongs to the IspF family. Homotrimer. It depends on a divalent metal cation as a cofactor.

The catalysed reaction is 4-CDP-2-C-methyl-D-erythritol 2-phosphate = 2-C-methyl-D-erythritol 2,4-cyclic diphosphate + CMP. It participates in isoprenoid biosynthesis; isopentenyl diphosphate biosynthesis via DXP pathway; isopentenyl diphosphate from 1-deoxy-D-xylulose 5-phosphate: step 4/6. Its function is as follows. Involved in the biosynthesis of isopentenyl diphosphate (IPP) and dimethylallyl diphosphate (DMAPP), two major building blocks of isoprenoid compounds. Catalyzes the conversion of 4-diphosphocytidyl-2-C-methyl-D-erythritol 2-phosphate (CDP-ME2P) to 2-C-methyl-D-erythritol 2,4-cyclodiphosphate (ME-CPP) with a corresponding release of cytidine 5-monophosphate (CMP). This chain is 2-C-methyl-D-erythritol 2,4-cyclodiphosphate synthase, found in Pseudomonas syringae pv. tomato (strain ATCC BAA-871 / DC3000).